The sequence spans 751 residues: Catalase-peroxidase 2 (751 aa).

Positions 1–27 (MFKKTVPLLSAVAIAISFSAGTGVANA) are cleaved as a signal peptide. A cross-link (tryptophyl-tyrosyl-methioninium (Trp-Tyr) (with M-264)) is located at residues 115–238 (WHGAGTYRVQ…LAAVQMGLIY (124 aa)). Catalysis depends on H116, which acts as the Proton acceptor. The segment at residues 238 to 264 (YVNPEGPNGKPDPLLAAKDIRDTFGRM) is a cross-link (tryptophyl-tyrosyl-methioninium (Tyr-Met) (with W-115)). Position 279 (H279) interacts with heme b.

Belongs to the peroxidase family. Peroxidase/catalase subfamily. Homodimer or homotetramer. It depends on heme b as a cofactor. Post-translationally, formation of the three residue Trp-Tyr-Met cross-link is important for the catalase, but not the peroxidase activity of the enzyme.

It carries out the reaction H2O2 + AH2 = A + 2 H2O. The enzyme catalyses 2 H2O2 = O2 + 2 H2O. Its function is as follows. Bifunctional enzyme with both catalase and broad-spectrum peroxidase activity. The protein is Catalase-peroxidase 2 of Idiomarina loihiensis (strain ATCC BAA-735 / DSM 15497 / L2-TR).